A 212-amino-acid chain; its full sequence is Ribosome biogenesis protein RLP7 (212 aa).

It belongs to the universal ribosomal protein uL30 family.

The protein resides in the nucleus. The protein localises to the nucleolus. Functionally, involved in the biogenesis of the 60S ribosomal subunit. May act as a specificity factor that binds precursor rRNAs and tethers the enzymes that carry out the early 5' to 3' exonucleolytic reactions that generate the mature rRNAs. The sequence is that of Ribosome biogenesis protein RLP7 (RLP7) from Cyberlindnera jadinii (Torula yeast).